A 143-amino-acid chain; its full sequence is Transcriptional regulator MraZ (143 aa).

SpoVT-AbrB domains follow at residues 5–47 and 76–119; these read EYHH…PIEE and AMES…SAER.

This sequence belongs to the MraZ family. In terms of assembly, forms oligomers.

The protein resides in the cytoplasm. Its subcellular location is the nucleoid. The chain is Transcriptional regulator MraZ from Lactobacillus johnsonii (strain CNCM I-12250 / La1 / NCC 533).